Reading from the N-terminus, the 604-residue chain is METYKGIQFFSNKGTVKNAFKKSNLGYEVMLDRKEDENFIYSNYEHVETQVEKDSKGMVVCKKYKNTYEILVEKVKEKRLGVLLVGIGGNNATTMLGGICANAKDLSYMNKCDLKRSNYLGSVFLSSNIRLGYNEKDKEHAYAPIYKLIDIYNPENIVYGGWDINNMNLKDCLVRNKVFDNEVIEKIKDDLDYVPLKSVYFKGNFIAGNQQRRVNNILYGKNKLEILEQVREQIRNFKKQNNLNELIVLWSGNTEKNIPHIPGVNDTFLNILHACKKNHESVSPSVIYALAAILENSPFINSSPQNTLVSAVVQLAQQKGIFIIGNDLKTGQTKIKNFLLDFYFGTGLKPKSIVSYNHLGNNDGKNLSSDLQFYSKKVSKSNLICDYVRANENLYVDDEKDTNVLVKKSIDYCEGDSLNEKGKVSADIEDDCTYVESLEKQKVNSEIVIKYVPYVGDDKKAIDEYISEIFMNGKNTIVLYNICQDSMLASPILIDLILLVELSQRVFFKPNQEKKTNEDEHLLNENIQIEDYKLSHTILKPKYSSFKNLDSVLFLSSLFCKSPFNSTVYKTRHSFFSQLESLWNFVRIISGLPIDAHIDLPYMI.

NAD(+)-binding residues include G88, G89, N90, N91, D163, S198, V199, Q210, R213, S251, G252, N253, T254, S303, D327, L328, T330, N361, N362, D363, K376, G456, D457, D485, and S486.

Belongs to the myo-inositol 1-phosphate synthase family. It depends on NAD(+) as a cofactor.

The catalysed reaction is D-glucose 6-phosphate = 1D-myo-inositol 3-phosphate. Its pathway is polyol metabolism; myo-inositol biosynthesis; myo-inositol from D-glucose 6-phosphate: step 1/2. Functionally, key enzyme in myo-inositol biosynthesis pathway that catalyzes the conversion of glucose 6-phosphate to 1-myo-inositol 1-phosphate in a NAD-dependent manner. Rate-limiting enzyme in the synthesis of all inositol-containing compounds. De novo-synthesized myo-inositol is essential for incorporation into GPI (glycosylphosphatidylinositol) glycolipids during intra-erythrocytic development. This chain is Inositol-3-phosphate synthase 1, found in Plasmodium falciparum (isolate 3D7).